Consider the following 181-residue polypeptide: Adenine phosphoribosyltransferase (181 aa).

It belongs to the purine/pyrimidine phosphoribosyltransferase family. In terms of assembly, homodimer.

Its subcellular location is the cytoplasm. The catalysed reaction is AMP + diphosphate = 5-phospho-alpha-D-ribose 1-diphosphate + adenine. It participates in purine metabolism; AMP biosynthesis via salvage pathway; AMP from adenine: step 1/1. Functionally, catalyzes a salvage reaction resulting in the formation of AMP, that is energically less costly than de novo synthesis. The sequence is that of Adenine phosphoribosyltransferase from Rhodopseudomonas palustris (strain HaA2).